The chain runs to 214 residues: Coiled-coil domain-containing protein 169 (214 aa).

The stretch at 29 to 154 (DAVQLSIFEL…NERRTYLAEM (126 aa)) forms a coiled coil. Polar residues predominate over residues 155–170 (SQGSGLHQVSKRQQVD). The disordered stretch occupies residues 155 to 214 (SQGSGLHQVSKRQQVDQLPRMQENLVKTGRYNPAKQKTVSAKRGPVKKITRPNHLPELHP).

It belongs to the CCDC169 family.

The protein is Coiled-coil domain-containing protein 169 (CCDC169) of Homo sapiens (Human).